Here is a 41-residue protein sequence, read N- to C-terminus: Phospholipase A2 homolog nigroviriditoxin acidic subunit A (41 aa).

The protein belongs to the phospholipase A2 family. Group II subfamily. D49 sub-subfamily. As to quaternary structure, nigroviriditoxin is a heterodimer of an acidic subunit A and a basic subunit B. Expressed by the venom gland.

It is found in the secreted. Functionally, heterodimer A-B: Nigroviriditoxin possesses phospholipase A2 (PLA2) activity. It consists of a non-covalent association of a basic PLA2 subunit B with a non-enzymatic subunit A. In terms of biological role, subunit A: The acidic subunit of nigroviriditoxin probably is a heterotrimer of three disulfide-linked chains generated by post-translational maturation of a PLA2-like precursor. It appears to have no PLA2 activity of its own, instead inhibiting the catalytic activity of subunit B. It is not toxic to mice by itself but increases toxicity of subunit B. This Bothriechis nigroviridis (Black-speckled palm pit viper) protein is Phospholipase A2 homolog nigroviriditoxin acidic subunit A.